We begin with the raw amino-acid sequence, 243 residues long: Pyridoxine 5'-phosphate synthase (243 aa).

Asn9 provides a ligand contact to 3-amino-2-oxopropyl phosphate. 11 to 12 contributes to the 1-deoxy-D-xylulose 5-phosphate binding site; the sequence is DH. Arg20 is a binding site for 3-amino-2-oxopropyl phosphate. The Proton acceptor role is filled by His45. Arg47 and His52 together coordinate 1-deoxy-D-xylulose 5-phosphate. Residue Glu72 is the Proton acceptor of the active site. Thr102 serves as a coordination point for 1-deoxy-D-xylulose 5-phosphate. His193 functions as the Proton donor in the catalytic mechanism. 3-amino-2-oxopropyl phosphate is bound by residues Gly194 and 215–216; that span reads GH.

Belongs to the PNP synthase family. As to quaternary structure, homooctamer; tetramer of dimers.

Its subcellular location is the cytoplasm. The catalysed reaction is 3-amino-2-oxopropyl phosphate + 1-deoxy-D-xylulose 5-phosphate = pyridoxine 5'-phosphate + phosphate + 2 H2O + H(+). It functions in the pathway cofactor biosynthesis; pyridoxine 5'-phosphate biosynthesis; pyridoxine 5'-phosphate from D-erythrose 4-phosphate: step 5/5. Its function is as follows. Catalyzes the complicated ring closure reaction between the two acyclic compounds 1-deoxy-D-xylulose-5-phosphate (DXP) and 3-amino-2-oxopropyl phosphate (1-amino-acetone-3-phosphate or AAP) to form pyridoxine 5'-phosphate (PNP) and inorganic phosphate. In Shigella sonnei (strain Ss046), this protein is Pyridoxine 5'-phosphate synthase.